The chain runs to 535 residues: GMP synthase [glutamine-hydrolyzing] (535 aa).

A Glutamine amidotransferase type-1 domain is found at 20-210; it reads PVLVVDFGAQ…LHRCAALPND (191 aa). The Nucleophile role is filled by Cys-97. Residues His-184 and Glu-186 contribute to the active site. Positions 211 to 409 constitute a GMPS ATP-PPase domain; the sequence is WDASSIIEDQ…LGLPDEIVWR (199 aa). 238–244 contacts ATP; that stretch reads SGGVDSA.

As to quaternary structure, homodimer.

The enzyme catalyses XMP + L-glutamine + ATP + H2O = GMP + L-glutamate + AMP + diphosphate + 2 H(+). It participates in purine metabolism; GMP biosynthesis; GMP from XMP (L-Gln route): step 1/1. Functionally, catalyzes the synthesis of GMP from XMP. The polypeptide is GMP synthase [glutamine-hydrolyzing] (Bifidobacterium longum (strain NCC 2705)).